The sequence spans 397 residues: ATP phosphoribosyltransferase regulatory subunit (397 aa).

It belongs to the class-II aminoacyl-tRNA synthetase family. HisZ subfamily. Heteromultimer composed of HisG and HisZ subunits.

Its subcellular location is the cytoplasm. Its pathway is amino-acid biosynthesis; L-histidine biosynthesis; L-histidine from 5-phospho-alpha-D-ribose 1-diphosphate: step 1/9. Its function is as follows. Required for the first step of histidine biosynthesis. May allow the feedback regulation of ATP phosphoribosyltransferase activity by histidine. The protein is ATP phosphoribosyltransferase regulatory subunit of Halalkalibacterium halodurans (strain ATCC BAA-125 / DSM 18197 / FERM 7344 / JCM 9153 / C-125) (Bacillus halodurans).